The chain runs to 94 residues: Selenoprotein K (94 aa).

The chain crosses the membrane as a helical span at residues 20 to 42 (LSFLTDFFWGAVEFIGLFFQTLV). The disordered stretch occupies residues 48–94 (KDGNNSASSRFSDGRGPPGFPGRRRMGRINHGAGPTPPPMGGGGUGR). Positions 49–58 (DGNNSASSRF) are enriched in polar residues. Sec92 is a non-standard amino acid (selenocysteine).

The protein belongs to the selenoprotein K family.

It is found in the endoplasmic reticulum membrane. Its subcellular location is the cell membrane. Its function is as follows. Required for Ca(2+) flux in immune cells and plays a role in T-cell proliferation and in T-cell and neutrophil migration. Involved in endoplasmic reticulum-associated degradation (ERAD) of soluble glycosylated proteins. Required for cell surface expression of CD36 and involved in macrophage uptake of low-density lipoprotein and in foam cell formation. Required for palmitoylation. The chain is Selenoprotein K (selenok) from Danio rerio (Zebrafish).